The chain runs to 557 residues: Phosphomethylpyrimidine synthase (557 aa).

Residues Asn-197, Met-226, Tyr-255, His-291, Ser-311–Gly-313, Asp-352–Arg-355, and Glu-391 contribute to the substrate site. Position 395 (His-395) interacts with Zn(2+). Position 418 (Tyr-418) interacts with substrate. His-459 lines the Zn(2+) pocket. Cys-539, Cys-542, and Cys-547 together coordinate [4Fe-4S] cluster.

This sequence belongs to the ThiC family. In terms of assembly, homodimer. Requires [4Fe-4S] cluster as cofactor.

It catalyses the reaction 5-amino-1-(5-phospho-beta-D-ribosyl)imidazole + S-adenosyl-L-methionine = 4-amino-2-methyl-5-(phosphooxymethyl)pyrimidine + CO + 5'-deoxyadenosine + formate + L-methionine + 3 H(+). It participates in cofactor biosynthesis; thiamine diphosphate biosynthesis. Catalyzes the synthesis of the hydroxymethylpyrimidine phosphate (HMP-P) moiety of thiamine from aminoimidazole ribotide (AIR) in a radical S-adenosyl-L-methionine (SAM)-dependent reaction. This chain is Phosphomethylpyrimidine synthase, found in Anaplasma phagocytophilum (strain HZ).